We begin with the raw amino-acid sequence, 346 residues long: Peroxidase 19 (346 aa).

An N-terminal signal peptide occupies residues 1–31; the sequence is MHVISLSLSSIFFFLFLTSTILISPVQPTTS. Intrachain disulfides connect Cys-51–Cys-134, Cys-84–Cys-89, Cys-140–Cys-342, and Cys-219–Cys-251. His-82 (proton acceptor) is an active-site residue. Ca(2+) is bound by residues Asp-83, Val-86, Gly-88, Asp-90, and Ser-92. Pro-182 serves as a coordination point for substrate. Asn-185 carries an N-linked (GlcNAc...) asparagine glycan. His-212 serves as a coordination point for heme b. Thr-213 is a binding site for Ca(2+). Residues Asp-265, Thr-268, and Asp-273 each coordinate Ca(2+).

This sequence belongs to the peroxidase family. Classical plant (class III) peroxidase subfamily. Heme b is required as a cofactor. It depends on Ca(2+) as a cofactor.

The protein resides in the secreted. The catalysed reaction is 2 a phenolic donor + H2O2 = 2 a phenolic radical donor + 2 H2O. Removal of H(2)O(2), oxidation of toxic reductants, biosynthesis and degradation of lignin, suberization, auxin catabolism, response to environmental stresses such as wounding, pathogen attack and oxidative stress. These functions might be dependent on each isozyme/isoform in each plant tissue. This is Peroxidase 19 (PER19) from Arabidopsis thaliana (Mouse-ear cress).